We begin with the raw amino-acid sequence, 274 residues long: 3-methyl-2-oxobutanoate hydroxymethyltransferase (274 aa).

Asp49 and Asp88 together coordinate Mg(2+). 3-methyl-2-oxobutanoate is bound by residues 49 to 50, Asp88, and Lys118; that span reads DS. Mg(2+) is bound at residue Glu120. Catalysis depends on Glu187, which acts as the Proton acceptor.

It belongs to the PanB family. In terms of assembly, homodecamer; pentamer of dimers. The cofactor is Mg(2+).

It localises to the cytoplasm. The catalysed reaction is 3-methyl-2-oxobutanoate + (6R)-5,10-methylene-5,6,7,8-tetrahydrofolate + H2O = 2-dehydropantoate + (6S)-5,6,7,8-tetrahydrofolate. It functions in the pathway cofactor biosynthesis; (R)-pantothenate biosynthesis; (R)-pantoate from 3-methyl-2-oxobutanoate: step 1/2. In terms of biological role, catalyzes the reversible reaction in which hydroxymethyl group from 5,10-methylenetetrahydrofolate is transferred onto alpha-ketoisovalerate to form ketopantoate. The protein is 3-methyl-2-oxobutanoate hydroxymethyltransferase of Rhodopseudomonas palustris (strain ATCC BAA-98 / CGA009).